Consider the following 211-residue polypeptide: LexA repressor (211 aa).

The segment at residues 29–49 (VREICTAVGLRSTSTVHSHLN) is a DNA-binding region (H-T-H motif). Active-site for autocatalytic cleavage activity residues include Ser-131 and Lys-169.

It belongs to the peptidase S24 family. Homodimer.

It catalyses the reaction Hydrolysis of Ala-|-Gly bond in repressor LexA.. Functionally, represses a number of genes involved in the response to DNA damage (SOS response), including recA and lexA. In the presence of single-stranded DNA, RecA interacts with LexA causing an autocatalytic cleavage which disrupts the DNA-binding part of LexA, leading to derepression of the SOS regulon and eventually DNA repair. This is LexA repressor from Clostridioides difficile (strain 630) (Peptoclostridium difficile).